The chain runs to 660 residues: Methionine--tRNA ligase 1 (660 aa).

The short motif at 15–25 is the 'HIGH' region element; the sequence is YYPSGKLHIGH. Positions 310–314 match the 'KMSKS' region motif; it reads KMSKS. Lysine 313 contributes to the ATP binding site. In terms of domain architecture, tRNA-binding spans 560–660; it reads DFFKVELRVA…QNLPNGTKIK (101 aa).

Belongs to the class-I aminoacyl-tRNA synthetase family. MetG type 2B subfamily. Homodimer.

Its subcellular location is the cytoplasm. The enzyme catalyses tRNA(Met) + L-methionine + ATP = L-methionyl-tRNA(Met) + AMP + diphosphate. In terms of biological role, is required not only for elongation of protein synthesis but also for the initiation of all mRNA translation through initiator tRNA(fMet) aminoacylation. The chain is Methionine--tRNA ligase 1 from Bacillus cereus (strain ATCC 14579 / DSM 31 / CCUG 7414 / JCM 2152 / NBRC 15305 / NCIMB 9373 / NCTC 2599 / NRRL B-3711).